The primary structure comprises 424 residues: Tyrosine--tRNA ligase (424 aa).

An L-tyrosine-binding site is contributed by Tyr-37. The 'HIGH' region motif lies at Pro-42–His-51. Lys-144 bears the N6-acetyllysine mark. L-tyrosine is bound by residues Tyr-175 and Gln-179. A 'KMSKS' region motif is present at residues Lys-235–Thr-239. Lys-238 serves as a coordination point for ATP. The region spanning Ala-357–Gly-414 is the S4 RNA-binding domain.

It belongs to the class-I aminoacyl-tRNA synthetase family. TyrS type 1 subfamily. Homodimer.

Its subcellular location is the cytoplasm. It carries out the reaction tRNA(Tyr) + L-tyrosine + ATP = L-tyrosyl-tRNA(Tyr) + AMP + diphosphate + H(+). Catalyzes the attachment of tyrosine to tRNA(Tyr) in a two-step reaction: tyrosine is first activated by ATP to form Tyr-AMP and then transferred to the acceptor end of tRNA(Tyr). The polypeptide is Tyrosine--tRNA ligase (Shigella boydii serotype 4 (strain Sb227)).